We begin with the raw amino-acid sequence, 224 residues long: UPF0758 protein PSPTO_0086 (224 aa).

Residues 102 to 224 (ALENPAQVRN…PLSMVEKGLM (123 aa)) form the MPN domain. H173, H175, and D186 together coordinate Zn(2+). The short motif at 173–186 (HNHPSGITTPSRSD) is the JAMM motif element.

This sequence belongs to the UPF0758 family.

The sequence is that of UPF0758 protein PSPTO_0086 from Pseudomonas syringae pv. tomato (strain ATCC BAA-871 / DC3000).